The primary structure comprises 36 residues: Peruvianin-1 (36 aa).

This sequence belongs to the germin family. As to quaternary structure, homohexamer, possibly consisting of a trimer of dimers. Glycosylated.

With respect to regulation, inhibited by iodoacetamide and trans-epoxysuccinyl-L-leucylamido(4-guanidino)butane (E-64) but not by phenylmethylsulfonyl fluoride (PMSF), pepstatin-A, ethylenediamine tetra acetic acid (EDTA) or ethylene glycol tetraacetic acid (EGTA). Cysteine protease able to degrade azocasein and benzoyl-arginine-beta-naphtylamide (BANA) in vitro. The chain is Peruvianin-1 from Thevetia peruviana (Yellow oleander).